A 307-amino-acid polypeptide reads, in one-letter code: Lipid droplet-associated hydrolase (307 aa).

S119 serves as the catalytic Nucleophile. The tract at residues G157–I200 is potential amphipathic helix required for binding to lipid droplets. The next 2 helical transmembrane spans lie at P166–L186 and L188–A208. Catalysis depends on charge relay system residues D254 and H283.

It belongs to the AB hydrolase superfamily. LDAH family. Interacts with the juvenile hormone hydrolase enzymes Jheh1 and Jheh2. Also interacts with Hmu, Cpr, Gp93 and Pvr. Expressed in accessory glands.

It localises to the lipid droplet. Its subcellular location is the endoplasmic reticulum membrane. The enzyme catalyses a cholesterol ester + H2O = cholesterol + a fatty acid + H(+). Its function is as follows. Probable serine lipid hydrolase associated with lipid droplets. Appears to lack or have very low cholesterol esterase activity. Appears to lack triglyceride lipase activity. Involved in cholesterol and triglyceride homeostasis; stimulates cellular triglyceride accumulation and cellular cholesterol release. Involved in negatively regulating juvenile hormone (JH) and possibly, insulin signaling activities such as triacylglycerols (TAG) storage, and thereby plays a role in the endocrine regulation of organismal growth and survival. Likely functions by enhancing the activity of the JH hydrolase enzymes Jheh1 and Jheh2. Required for lipid droplet positioning and fat storage. The chain is Lipid droplet-associated hydrolase from Drosophila melanogaster (Fruit fly).